The primary structure comprises 1025 residues: Protein HIRA (1025 aa).

WD repeat units follow at residues 11–53 (HNGK…KEED), 68–107 (NHLA…GPST), 129–168 (NHTG…EMVT), 172–211 (GHTG…MEAN), 220–263 (GGTT…TNMD), 266–322 (GHRK…PLVV), and 326–367 (LFDK…DPLS). 4 disordered regions span residues 408 to 433 (ERRN…KLNS), 490 to 534 (GSSM…AAKV), 563 to 614 (RFTE…EDKM), and 634 to 678 (GAEV…AAGA). Polar residues-rich tracts occupy residues 412–433 (STQA…KLNS) and 490–508 (GSSM…SSPG). Basic and acidic residues predominate over residues 588–614 (ERPKESTPMQKDVKSKEDTSSDSEDKM).

The protein belongs to the WD repeat HIR1 family.

The protein resides in the nucleus. Functionally, required for replication-independent chromatin assembly and for the periodic repression of histone gene transcription during the cell cycle. In Takifugu rubripes (Japanese pufferfish), this protein is Protein HIRA (hira).